The following is a 511-amino-acid chain: Histidine ammonia-lyase (511 aa).

The 5-imidazolinone (Ala-Gly) cross-link spans 142–144 (ASG). Ser143 carries the post-translational modification 2,3-didehydroalanine (Ser).

This sequence belongs to the PAL/histidase family. Contains an active site 4-methylidene-imidazol-5-one (MIO), which is formed autocatalytically by cyclization and dehydration of residues Ala-Ser-Gly.

The protein localises to the cytoplasm. The enzyme catalyses L-histidine = trans-urocanate + NH4(+). Its pathway is amino-acid degradation; L-histidine degradation into L-glutamate; N-formimidoyl-L-glutamate from L-histidine: step 1/3. The sequence is that of Histidine ammonia-lyase from Brucella anthropi (strain ATCC 49188 / DSM 6882 / CCUG 24695 / JCM 21032 / LMG 3331 / NBRC 15819 / NCTC 12168 / Alc 37) (Ochrobactrum anthropi).